The primary structure comprises 289 residues: Aquaporin PIP1-2 (289 aa).

The segment at Met-1 to Glu-36 is disordered. Helical transmembrane passes span Ile-58–Val-78 and Ile-93–His-115. The NPA 1 motif lies at Asn-117–Ala-119. The next 3 helical transmembrane spans lie at Leu-136–Phe-156, Gly-178–Ala-198, and Ile-212–Ile-232. Residues Asn-238–Ala-240 carry the NPA 2 motif. The helical transmembrane segment at Ile-260–Ile-280 threads the bilayer.

This sequence belongs to the MIP/aquaporin (TC 1.A.8) family. PIP (TC 1.A.8.11) subfamily. Interacts with PIP2-1 to form heteromers. In terms of tissue distribution, highly expressed in developing tassels and at lower levels in roots, shoots, ears and embryos. Expressed in the root growing zone at 5-6 mm from the root tip. Expressed in xylem parenchyma.

It is found in the cell membrane. Functionally, water channel required to facilitate the transport of water across cell membrane. Active as heteromers with PIP1-1, PIP2-1, PIP2-4 or PIP2-5, but not as homomers. In Zea mays (Maize), this protein is Aquaporin PIP1-2 (PIP1-2).